Here is a 162-residue protein sequence, read N- to C-terminus: Ribonuclease (162 aa).

Residues 1–29 form the signal peptide; it reads MKKISSVFTMFALIAAILFSGFIPQQAYA. A propeptide spanning residues 30–53 is cleaved from the precursor; the sequence is ETTLTPTATNKTASIQLTSDVHTL. Residue glutamate 125 is the Proton acceptor of the active site. Residue histidine 154 is the Proton donor of the active site.

Belongs to the ribonuclease N1/T1 family.

It localises to the secreted. Functionally, this is a purine-specific ribonuclease. The sequence is that of Ribonuclease from Bacillus pumilus (Bacillus mesentericus).